Here is a 472-residue protein sequence, read N- to C-terminus: MDKKIQRFSCTTILVGKKASYDGSTMVARTEDSQNGDFTPKKMIVVKPEDQPRHYRSVQSSFEMDLPDNPMTYTSVPDALGKDGIWAEAGVNEANVTMSATETITTNSRVLGADPLVASGIGEEDMVTLVLPYIRSAREGVLRLGAILEDYGTYESNGVAFSDEHDIWWLETIGGHHWIARRVPDDAYVTNPNQFGIDHFEFNNPEDYLCSADLKDFIDTYHLDLTYSHEHFNPRYAFGSQRDKDRHYNTPRAWIMQKFLNPEIVQDPRSFALAWCQKPYRKITVEDVKYVLSSHYQDTGYDPYGSEGTPVSKKVFRPIGINRTSQTAILHIRPNKPQEIAAIQWIAYGSMPFNTMVPFFTQVKTIPDYFANTYENVSTDNFYWTNRLIAALADPHYNHHETDLDNYLEETMAKGHAMLHAVEAQLLAGETVDLEEENQKMSDYVQGETQTLLNKILFDASNLMTNRFSLSD.

The active site involves cysteine 10.

This sequence belongs to the peptidase C69 family.

It carries out the reaction an L-aminoacyl-L-amino acid + H2O = 2 an L-alpha-amino acid. The chain is Probable dipeptidase A (pepDA) from Streptococcus pyogenes serotype M18 (strain MGAS8232).